Reading from the N-terminus, the 593-residue chain is Double-stranded RNA-binding protein 2 (593 aa).

DRBM domains are found at residues 1–70 (MYKN…ELSK) and 87–155 (IYKN…ELKQ). Over residues 188-197 (LNQTNGGKTP) the composition is skewed to polar residues. Disordered stretches follow at residues 188 to 221 (LNQTNGGKTPQQKEKQQSSNRPSSRRPSYPKSNA), 357 to 408 (APDF…ESNQ), and 546 to 593 (VNSS…KLHI). Residues 205–219 (SSNRPSSRRPSYPKS) are compositionally biased toward low complexity. Polar residues predominate over residues 378 to 408 (ESSPASEQESKSHTASSSATRSPSQQLESNQ). Residues 572–586 (RTNTSDTSNAATASS) show a composition bias toward low complexity.

Functionally, binds double-stranded RNA. This chain is Double-stranded RNA-binding protein 2 (DRB2), found in Oryza sativa subsp. japonica (Rice).